The chain runs to 544 residues: CTP synthase (544 aa).

Residues 1-266 (MKKRFIFITG…DQIICHHFKL (266 aa)) are amidoligase domain. Ser-14 serves as a coordination point for CTP. Position 14 (Ser-14) interacts with UTP. Residues 15–20 (SLGKGI) and Asp-72 contribute to the ATP site. Residues Asp-72 and Glu-140 each coordinate Mg(2+). CTP contacts are provided by residues 147–149 (DIE), 187–192 (KTKPTQ), and Lys-223. UTP-binding positions include 187-192 (KTKPTQ) and Lys-223. The Glutamine amidotransferase type-1 domain occupies 291–541 (TIGIIGKYIK…IKAAIQYKKI (251 aa)). Gly-352 is an L-glutamine binding site. The Nucleophile; for glutamine hydrolysis role is filled by Cys-379. L-glutamine contacts are provided by residues 380 to 383 (LGMQ), Glu-403, and Arg-469. Residues His-514 and Glu-516 contribute to the active site.

This sequence belongs to the CTP synthase family. Homotetramer.

The catalysed reaction is UTP + L-glutamine + ATP + H2O = CTP + L-glutamate + ADP + phosphate + 2 H(+). The enzyme catalyses L-glutamine + H2O = L-glutamate + NH4(+). It catalyses the reaction UTP + NH4(+) + ATP = CTP + ADP + phosphate + 2 H(+). Its pathway is pyrimidine metabolism; CTP biosynthesis via de novo pathway; CTP from UDP: step 2/2. Its activity is regulated as follows. Allosterically activated by GTP, when glutamine is the substrate; GTP has no effect on the reaction when ammonia is the substrate. The allosteric effector GTP functions by stabilizing the protein conformation that binds the tetrahedral intermediate(s) formed during glutamine hydrolysis. Inhibited by the product CTP, via allosteric rather than competitive inhibition. In terms of biological role, catalyzes the ATP-dependent amination of UTP to CTP with either L-glutamine or ammonia as the source of nitrogen. Regulates intracellular CTP levels through interactions with the four ribonucleotide triphosphates. The chain is CTP synthase from Buchnera aphidicola subsp. Baizongia pistaciae (strain Bp).